Consider the following 357-residue polypeptide: Protein pelota homolog (357 aa).

Belongs to the eukaryotic release factor 1 family. Pelota subfamily. In terms of assembly, monomer. Requires a divalent metal cation as cofactor.

The protein resides in the cytoplasm. In terms of biological role, may function in recognizing stalled ribosomes, interact with stem-loop structures in stalled mRNA molecules, and effect endonucleolytic cleavage of the mRNA. May play a role in the release non-functional ribosomes and degradation of damaged mRNAs. Has endoribonuclease activity. The chain is Protein pelota homolog from Thermococcus kodakarensis (strain ATCC BAA-918 / JCM 12380 / KOD1) (Pyrococcus kodakaraensis (strain KOD1)).